A 545-amino-acid chain; its full sequence is CTP synthase (545 aa).

The interval 1-265 is amidoligase domain; sequence MTKYIFITGG…DEIVVKKLSL (265 aa). S13 contributes to the CTP binding site. S13 contributes to the UTP binding site. ATP contacts are provided by residues 14–19 and D71; that span reads SLGKGI. Positions 71 and 139 each coordinate Mg(2+). CTP contacts are provided by residues 146-148, 186-191, and K222; these read DIE and KTKPTQ. Residues 186–191 and K222 each bind UTP; that span reads KTKPTQ. The Glutamine amidotransferase type-1 domain maps to 290 to 541; the sequence is KIAMVGKYTE…VLAARIHHQE (252 aa). Residue G351 participates in L-glutamine binding. The active-site Nucleophile; for glutamine hydrolysis is C378. Residues 379–382, E402, and R469 each bind L-glutamine; that span reads LGMQ. Residues H514 and E516 contribute to the active site.

This sequence belongs to the CTP synthase family. As to quaternary structure, homotetramer.

The enzyme catalyses UTP + L-glutamine + ATP + H2O = CTP + L-glutamate + ADP + phosphate + 2 H(+). It carries out the reaction L-glutamine + H2O = L-glutamate + NH4(+). It catalyses the reaction UTP + NH4(+) + ATP = CTP + ADP + phosphate + 2 H(+). It functions in the pathway pyrimidine metabolism; CTP biosynthesis via de novo pathway; CTP from UDP: step 2/2. With respect to regulation, allosterically activated by GTP, when glutamine is the substrate; GTP has no effect on the reaction when ammonia is the substrate. The allosteric effector GTP functions by stabilizing the protein conformation that binds the tetrahedral intermediate(s) formed during glutamine hydrolysis. Inhibited by the product CTP, via allosteric rather than competitive inhibition. In terms of biological role, catalyzes the ATP-dependent amination of UTP to CTP with either L-glutamine or ammonia as the source of nitrogen. Regulates intracellular CTP levels through interactions with the four ribonucleotide triphosphates. This is CTP synthase from Legionella pneumophila (strain Corby).